Reading from the N-terminus, the 333-residue chain is Adenosine deaminase (333 aa).

Residues His12 and His14 each coordinate Zn(2+). Substrate is bound by residues His14, Asp16, and Gly170. Residue His197 participates in Zn(2+) binding. The Proton donor role is filled by Glu200. Asp278 serves as a coordination point for Zn(2+). Asp279 is a binding site for substrate.

The protein belongs to the metallo-dependent hydrolases superfamily. Adenosine and AMP deaminases family. Adenosine deaminase subfamily. It depends on Zn(2+) as a cofactor.

The enzyme catalyses adenosine + H2O + H(+) = inosine + NH4(+). The catalysed reaction is 2'-deoxyadenosine + H2O + H(+) = 2'-deoxyinosine + NH4(+). In terms of biological role, catalyzes the hydrolytic deamination of adenosine and 2-deoxyadenosine. The sequence is that of Adenosine deaminase from Salmonella schwarzengrund (strain CVM19633).